The sequence spans 341 residues: Putative MAGE domain-containing protein MAGEA13P (341 aa).

2 disordered regions span residues 1 to 21 (MPHS…APKE) and 78 to 101 (KATP…GASQ). The segment covering 87–97 (ESSRSQEKKDP) has biased composition (basic and acidic residues). An MAGE domain is found at 105 to 304 (LEKKVDELVK…SSFPLLYEEA (200 aa)).

This is Putative MAGE domain-containing protein MAGEA13P (MAGEA13P) from Homo sapiens (Human).